The sequence spans 473 residues: 3-isopropylmalate dehydratase large subunit (473 aa).

[4Fe-4S] cluster contacts are provided by Cys354, Cys414, and Cys417.

It belongs to the aconitase/IPM isomerase family. LeuC type 1 subfamily. Heterodimer of LeuC and LeuD. The cofactor is [4Fe-4S] cluster.

The enzyme catalyses (2R,3S)-3-isopropylmalate = (2S)-2-isopropylmalate. The protein operates within amino-acid biosynthesis; L-leucine biosynthesis; L-leucine from 3-methyl-2-oxobutanoate: step 2/4. Its function is as follows. Catalyzes the isomerization between 2-isopropylmalate and 3-isopropylmalate, via the formation of 2-isopropylmaleate. The chain is 3-isopropylmalate dehydratase large subunit from Mycobacterium tuberculosis (strain CDC 1551 / Oshkosh).